A 1024-amino-acid chain; its full sequence is Protein translocase subunit SecA (1024 aa).

ATP contacts are provided by residues Gln143, 161-165, and Asp661; that span reads GEGKT. A disordered region spans residues 970–1024; that stretch reads HKAAESVYTASSDEPETNQEESPQQPAIAEKKPGRNDLCPCGSGKKYKNCHGQQP. Positions 1008, 1010, 1019, and 1020 each coordinate Zn(2+).

Belongs to the SecA family. Monomer and homodimer. Part of the essential Sec protein translocation apparatus which comprises SecA, SecYEG and auxiliary proteins SecDF. Other proteins may also be involved. Zn(2+) is required as a cofactor.

It localises to the cell inner membrane. It is found in the cytoplasm. It carries out the reaction ATP + H2O + cellular proteinSide 1 = ADP + phosphate + cellular proteinSide 2.. Part of the Sec protein translocase complex. Interacts with the SecYEG preprotein conducting channel. Has a central role in coupling the hydrolysis of ATP to the transfer of proteins into and across the cell membrane, serving as an ATP-driven molecular motor driving the stepwise translocation of polypeptide chains across the membrane. The protein is Protein translocase subunit SecA of Pelodictyon phaeoclathratiforme (strain DSM 5477 / BU-1).